Here is a 253-residue protein sequence, read N- to C-terminus: Zinc import ATP-binding protein ZnuC (253 aa).

Residues 6–227 form the ABC transporter domain; that stretch reads VTLNKISVTF…FGNRGAEQLA (222 aa). 38-45 provides a ligand contact to ATP; the sequence is GPNGAGKS.

The protein belongs to the ABC transporter superfamily. Zinc importer (TC 3.A.1.15.5) family. As to quaternary structure, the complex is composed of two ATP-binding proteins (ZnuC), two transmembrane proteins (ZnuB) and a solute-binding protein (ZnuA).

The protein resides in the cell inner membrane. The enzyme catalyses Zn(2+)(out) + ATP(in) + H2O(in) = Zn(2+)(in) + ADP(in) + phosphate(in) + H(+)(in). Its function is as follows. Part of the ABC transporter complex ZnuABC involved in zinc import. Responsible for energy coupling to the transport system. The chain is Zinc import ATP-binding protein ZnuC from Yersinia pestis bv. Antiqua (strain Antiqua).